A 341-amino-acid chain; its full sequence is UDP-3-O-acylglucosamine N-acyltransferase (341 aa).

His-239 (proton acceptor) is an active-site residue.

Belongs to the transferase hexapeptide repeat family. LpxD subfamily. In terms of assembly, homotrimer.

It carries out the reaction a UDP-3-O-[(3R)-3-hydroxyacyl]-alpha-D-glucosamine + a (3R)-hydroxyacyl-[ACP] = a UDP-2-N,3-O-bis[(3R)-3-hydroxyacyl]-alpha-D-glucosamine + holo-[ACP] + H(+). It participates in bacterial outer membrane biogenesis; LPS lipid A biosynthesis. Its function is as follows. Catalyzes the N-acylation of UDP-3-O-acylglucosamine using 3-hydroxyacyl-ACP as the acyl donor. Is involved in the biosynthesis of lipid A, a phosphorylated glycolipid that anchors the lipopolysaccharide to the outer membrane of the cell. The protein is UDP-3-O-acylglucosamine N-acyltransferase of Idiomarina loihiensis (strain ATCC BAA-735 / DSM 15497 / L2-TR).